Reading from the N-terminus, the 32-residue chain is Photosystem II reaction center protein Z (32 aa).

Residues 12-32 traverse the membrane as a helical segment; sequence FGAAAWIGLVLLVGTLYYFVV.

The protein belongs to the PsbZ family. PSII is composed of 1 copy each of membrane proteins PsbA, PsbB, PsbC, PsbD, PsbE, PsbF, PsbH, PsbI, PsbJ, PsbK, PsbL, PsbM, PsbT, PsbY, PsbZ, Psb30/Ycf12, at least 3 peripheral proteins of the oxygen-evolving complex and a large number of cofactors. It forms dimeric complexes.

It is found in the plastid. It localises to the chloroplast thylakoid membrane. In terms of biological role, may control the interaction of photosystem II (PSII) cores with the light-harvesting antenna, regulates electron flow through the 2 photosystem reaction centers. PSII is a light-driven water plastoquinone oxidoreductase, using light energy to abstract electrons from H(2)O, generating a proton gradient subsequently used for ATP formation. The protein is Photosystem II reaction center protein Z of Euglena granulata.